Consider the following 357-residue polypeptide: U5 small nuclear ribonucleoprotein 40 kDa protein (357 aa).

A Glycyl lysine isopeptide (Lys-Gly) (interchain with G-Cter in SUMO2) cross-link involves residue lysine 18. Residue arginine 21 is modified to Asymmetric dimethylarginine. WD repeat units lie at residues glycine 64–alanine 103, glycine 107–arginine 146, glycine 149–threonine 189, glutamine 191–threonine 230, glycine 233–arginine 272, asparagine 283–lysine 322, and glycine 325–glutamine 357. Lysine 270 is covalently cross-linked (Glycyl lysine isopeptide (Lys-Gly) (interchain with G-Cter in SUMO2)).

In terms of assembly, component of the pre-catalytic and catalytic spliceosome complexes. Component of the postcatalytic spliceosome P complex. Part of the U5 snRNP complex. Interacts with PRPF8. Component of the U4/U6-U5 tri-snRNP complex composed of the U4, U6 and U5 snRNAs and at least PRPF3, PRPF4, PRPF6, PRPF8, PRPF31, SNRNP200, TXNL4A, WDR57, SNRNP40, DDX23, CD2BP2, PPIH, SNU13, EFTUD2, SART1 and USP39. Component of the minor spliceosome, which splices U12-type introns.

The protein localises to the nucleus. In terms of biological role, required for pre-mRNA splicing as component of the activated spliceosome. Component of the U5 small nuclear ribonucleoprotein (snRNP) complex and the U4/U6-U5 tri-snRNP complex, building blocks of the spliceosome. As a component of the minor spliceosome, involved in the splicing of U12-type introns in pre-mRNAs. The sequence is that of U5 small nuclear ribonucleoprotein 40 kDa protein (SNRNP40) from Pongo abelii (Sumatran orangutan).